A 458-amino-acid chain; its full sequence is RuvB-like helicase 1 (458 aa).

Positions 1-18 (MVQITEVKENQSSRESRT) are enriched in basic and acidic residues. The interval 1-20 (MVQITEVKENQSSRESRTAA) is disordered. Position 73–80 (73–80 (GPPATGKT)) interacts with ATP.

Belongs to the RuvB family. As to quaternary structure, may form heterododecamers with RVB2. Component of the SWR1 chromatin remodeling complex, the INO80 chromatin remodeling complex, and of the R2TP complex.

The protein localises to the nucleus. It catalyses the reaction ATP + H2O = ADP + phosphate + H(+). Its function is as follows. DNA helicase which participates in several chromatin remodeling complexes, including the SWR1 and the INO80 complexes. The SWR1 complex mediates the ATP-dependent exchange of histone H2A for the H2A variant HZT1 leading to transcriptional regulation of selected genes by chromatin remodeling. The INO80 complex remodels chromatin by shifting nucleosomes and is involved in DNA repair. Also involved in pre-rRNA processing. The chain is RuvB-like helicase 1 (RVB1) from Candida albicans (strain SC5314 / ATCC MYA-2876) (Yeast).